Reading from the N-terminus, the 129-residue chain is Small ribosomal subunit protein uS11 (129 aa).

Belongs to the universal ribosomal protein uS11 family. In terms of assembly, part of the 30S ribosomal subunit. Interacts with proteins S7 and S18. Binds to IF-3.

In terms of biological role, located on the platform of the 30S subunit, it bridges several disparate RNA helices of the 16S rRNA. Forms part of the Shine-Dalgarno cleft in the 70S ribosome. The sequence is that of Small ribosomal subunit protein uS11 from Tolumonas auensis (strain DSM 9187 / NBRC 110442 / TA 4).